Consider the following 552-residue polypeptide: Probable protein kinase UbiB (552 aa).

The Protein kinase domain occupies histidine 121 to alanine 504. ATP is bound by residues leucine 127–valine 135 and lysine 149. The active-site Proton acceptor is aspartate 284. Transmembrane regions (helical) follow at residues valine 501–histidine 521 and tyrosine 526–phenylalanine 546.

The protein belongs to the ABC1 family. UbiB subfamily.

It localises to the cell inner membrane. It participates in cofactor biosynthesis; ubiquinone biosynthesis [regulation]. Is probably a protein kinase regulator of UbiI activity which is involved in aerobic coenzyme Q (ubiquinone) biosynthesis. This is Probable protein kinase UbiB from Xylella fastidiosa (strain 9a5c).